The sequence spans 272 residues: Tryptophan synthase alpha chain (272 aa).

Active-site proton acceptor residues include glutamate 49 and aspartate 60.

Belongs to the TrpA family. Tetramer of two alpha and two beta chains.

It catalyses the reaction (1S,2R)-1-C-(indol-3-yl)glycerol 3-phosphate + L-serine = D-glyceraldehyde 3-phosphate + L-tryptophan + H2O. The protein operates within amino-acid biosynthesis; L-tryptophan biosynthesis; L-tryptophan from chorismate: step 5/5. Its function is as follows. The alpha subunit is responsible for the aldol cleavage of indoleglycerol phosphate to indole and glyceraldehyde 3-phosphate. This is Tryptophan synthase alpha chain from Psychrobacter cryohalolentis (strain ATCC BAA-1226 / DSM 17306 / VKM B-2378 / K5).